Consider the following 156-residue polypeptide: Small ribosomal subunit protein uS7 (156 aa).

It belongs to the universal ribosomal protein uS7 family. Part of the 30S ribosomal subunit. Contacts proteins S9 and S11.

Functionally, one of the primary rRNA binding proteins, it binds directly to 16S rRNA where it nucleates assembly of the head domain of the 30S subunit. Is located at the subunit interface close to the decoding center, probably blocks exit of the E-site tRNA. The protein is Small ribosomal subunit protein uS7 of Finegoldia magna (strain ATCC 29328 / DSM 20472 / WAL 2508) (Peptostreptococcus magnus).